We begin with the raw amino-acid sequence, 469 residues long: Protein RUFY3 (469 aa).

T5 and T12 each carry phosphothreonine. Residues S34 and S49 each carry the phosphoserine modification. The residue at position 51 (T51) is a Phosphothreonine. The RUN domain maps to 95–227; that stretch reads DSDYAPLQQF…IDANFCMKGE (133 aa). Coiled-coil stretches lie at residues 271-362 and 422-463; these read NRHL…VEKE and KSEL…AANK.

In terms of assembly, interacts with PAK1. Interacts (via C-terminus) with Ras-related Rab-5 proteins. Interacts (via C-terminus) with Ras-related Rap-2 proteins. Interacts with PIK3CA and PIK3R1. Interacts (via N-terminus) with FSCN1; this interaction induces neuron axon development. Interacts with DBN1. Interacts (via the second coiled coil) with GTP-, but not GDP-bound ARL8A and ARL8B. Interacts with dynactin/DCTN1 and the dynein intermediate chain DYNC1I1/2. Directly interacts with DYNC1LI1. In terms of processing, phosphorylated by PAK1. Isoform 1 is partially phosphorylated. Overexpressed in gastric cancer cells and tissues (at protein level).

It is found in the cytoplasm. It localises to the endomembrane system. Its subcellular location is the cell projection. The protein localises to the invadopodium. The protein resides in the perikaryon. It is found in the growth cone. It localises to the filopodium. Its subcellular location is the lamellipodium. The protein localises to the lysosome. ARL8 effector that promotes the coupling of endolysosomes to dynein-dynactin for retrograde transport along microtubules. Acts by binding both GTP-bound ARL8 and dynein-dynactin. In nonneuronal cells, promotes concentration of endolysosomes in the juxtanuclear area. In hippocampal neurons, drives retrograde transport of endolysosomes from the axon to the soma. Plays a role in the generation of neuronal polarity formation and axon growth. Implicated in the formation of a single axon by developing neurons. May inhibit the formation of additional axons by inhibition of PI3K in minor neuronal processes. Plays a role in the formation of F-actin-enriched protrusive structures at the cell periphery. Plays a role in cytoskeletal organization by regulating the subcellular localization of FSCN1 and DBN1 at axonal growth cones. This is Protein RUFY3 from Homo sapiens (Human).